A 352-amino-acid chain; its full sequence is Replication factor C subunit 5 (352 aa).

The protein belongs to the activator 1 small subunits family. Heteropentamer of subunits rfc1, rfc2, rfc3, rfc4 and rfc5 that forms a complex with PCNA in the presence of ATP.

It localises to the nucleus. Functionally, the elongation of primed DNA templates by DNA polymerase delta and epsilon requires the action of the accessory proteins proliferating cell nuclear antigen (PCNA) and activator 1. The sequence is that of Replication factor C subunit 5 from Neurospora crassa (strain ATCC 24698 / 74-OR23-1A / CBS 708.71 / DSM 1257 / FGSC 987).